We begin with the raw amino-acid sequence, 282 residues long: Phosphatidylglycerol--prolipoprotein diacylglyceryl transferase (282 aa).

The next 4 membrane-spanning stretches (helical) occupy residues 23 to 43 (IGPL…LLGW), 71 to 91 (FIVW…IFFY), 106 to 126 (IWNG…AMII), and 132 to 152 (GIPI…GLFF). Arg154 lines the a 1,2-diacyl-sn-glycero-3-phospho-(1'-sn-glycerol) pocket. Transmembrane regions (helical) follow at residues 189 to 209 (LYEA…LVYG), 217 to 237 (GFIT…VEFF), and 252 to 272 (WLTM…WAML).

It belongs to the Lgt family.

It localises to the cell inner membrane. The catalysed reaction is L-cysteinyl-[prolipoprotein] + a 1,2-diacyl-sn-glycero-3-phospho-(1'-sn-glycerol) = an S-1,2-diacyl-sn-glyceryl-L-cysteinyl-[prolipoprotein] + sn-glycerol 1-phosphate + H(+). The protein operates within protein modification; lipoprotein biosynthesis (diacylglyceryl transfer). In terms of biological role, catalyzes the transfer of the diacylglyceryl group from phosphatidylglycerol to the sulfhydryl group of the N-terminal cysteine of a prolipoprotein, the first step in the formation of mature lipoproteins. The chain is Phosphatidylglycerol--prolipoprotein diacylglyceryl transferase from Rhizobium leguminosarum bv. trifolii (strain WSM2304).